The primary structure comprises 560 residues: Poly(3-hydroxyalkanoate) polymerase 2 (560 aa).

Residue Cys296 is part of the active site.

This sequence belongs to the PHA/PHB synthase family. Type II PhaC subfamily.

Its pathway is biopolymer metabolism; poly-(R)-3-hydroxybutanoate biosynthesis. Functionally, synthesizes poly(3-hydroxyalkanoates) (PHA), complements a mutant of P.putida that does not make PHA. In Ectopseudomonas oleovorans (Pseudomonas oleovorans), this protein is Poly(3-hydroxyalkanoate) polymerase 2.